We begin with the raw amino-acid sequence, 141 residues long: MEIEESNLKWLRTEFIATKKPPEPKAPLQPPLPPSKRKGKPPKSPRRRSSRIKPGDLIDYRNISLIGRFISQQGKILSRRVNRVTLKQQRRLTIAIKQARILSSLPFHATDQLFKIKRKIKRRESTARKKRKKGFRKRPKK.

Disordered regions lie at residues 14–55 (EFIA…IKPG) and 120–141 (IKRR…RPKK). The span at 24–34 (PKAPLQPPLPP) shows a compositional bias: pro residues. Residues 35–51 (SKRKGKPPKSPRRRSSR) show a composition bias toward basic residues.

It belongs to the bacterial ribosomal protein bS18 family. In terms of assembly, part of the 30S ribosomal subunit.

It is found in the plastid. It localises to the chloroplast. In Pelargonium hortorum (Common geranium), this protein is Small ribosomal subunit protein bS18c.